A 312-amino-acid polypeptide reads, in one-letter code: RNA binding protein fox-1 homolog 3 (312 aa).

Over residues 1 to 29 (MAQPYPPAQYPPPPQNGIPAEYAPPPPHP) the composition is skewed to pro residues. A disordered region spans residues 1 to 104 (MAQPYPPAQY…KQQPKRLHVS (104 aa)). Over residues 49–87 (TPAQTHPEQPGSEASTQPIAGTQTVPQTDEAAQTDSQPL) the composition is skewed to polar residues. An RRM domain is found at 100–175 (RLHVSNIPFR…RKIEVNNATA (76 aa)). R223 carries the post-translational modification Asymmetric dimethylarginine; alternate. Residue R223 is modified to Omega-N-methylarginine; alternate. Position 272 is an asymmetric dimethylarginine (R272).

The protein localises to the nucleus. It localises to the cytoplasm. Its function is as follows. Pre-mRNA alternative splicing regulator. Regulates alternative splicing of RBFOX2 to enhance the production of mRNA species that are targeted for nonsense-mediated decay (NMD). This is RNA binding protein fox-1 homolog 3 (RBFOX3) from Homo sapiens (Human).